Consider the following 487-residue polypeptide: WRKY transcription factor 1 (487 aa).

The interval 69–104 is disordered; the sequence is QSEVDVASPVSEKAPKVSESSGALSLQSGSEGNSPF. Position 76 is a phosphoserine (S76). A compositionally biased stretch (polar residues) spans 86–101; that stretch reads SESSGALSLQSGSEGN. Residues 105 to 169 constitute a DNA-binding region (WRKY 1); sequence IREKVMEDGY…YFGEHDHPKP (65 aa). Positions 136, 141, 164, and 166 each coordinate Zn(2+). The segment at 255-287 is disordered; sequence SSRITGDNTHKDYNSPTAKRRKKGGNIELSPVE. The short motif at 273–277 is the Nuclear localization signal element; the sequence is KRRKK. Positions 301–366 form a DNA-binding region, WRKY 2; the sequence is TLFDIVNDGY…YEGKHDHDMP (66 aa). Residues C332, C337, H361, and H363 each contribute to the Zn(2+) site. The segment at 380 to 487 is disordered; that stretch reads EVDDKEGDAN…QKPKTEPAQS (108 aa). Positions 390-401 are enriched in polar residues; it reads KTPQSSTLQSIT. Composition is skewed to basic and acidic residues over residues 429–462 and 476–487; these read LDEKLKEEIKERSDANKDHAANHAKPEAKSDDKT and EEQKPKTEPAQS.

Belongs to the WRKY group I family. Expressed to similar levels in root and flower, to a somewhat lower level in stem and to low levels in leaf and siliques.

The protein resides in the nucleus. In terms of biological role, transcription factor. Binds to a 5'-CGTTGACCGAG-3' consensus core sequence which contains a W box, a frequently occurring elicitor-responsive cis-acting element. The protein is WRKY transcription factor 1 of Arabidopsis thaliana (Mouse-ear cress).